The primary structure comprises 146 residues: MAPKKKVSGFIKLQIQAGQANPAPPVGPALGAHGVNIMEFCKAYNAATEDQRGNVVPVEITVYEDRSFTFKLKTPPAAKLLLKAANLQKGSGEPNTNKVGSVTWDQCKEIAQTKMEDLNANDLDMGARIIAGTARSMGIEVKGATA.

Belongs to the universal ribosomal protein uL11 family. As to quaternary structure, part of the ribosomal stalk of the 50S ribosomal subunit. Interacts with L10 and the large rRNA to form the base of the stalk. L10 forms an elongated spine to which L12 dimers bind in a sequential fashion forming a multimeric L10(L12)X complex. One or more lysine residues are methylated.

Functionally, forms part of the ribosomal stalk which helps the ribosome interact with GTP-bound translation factors. The chain is Large ribosomal subunit protein uL11 from Corynebacterium kroppenstedtii (strain DSM 44385 / JCM 11950 / CIP 105744 / CCUG 35717).